Consider the following 270-residue polypeptide: Acyl-[acyl-carrier-protein]--UDP-N-acetylglucosamine O-acyltransferase (270 aa).

This sequence belongs to the transferase hexapeptide repeat family. LpxA subfamily. Homotrimer.

It is found in the cytoplasm. It catalyses the reaction a (3R)-hydroxyacyl-[ACP] + UDP-N-acetyl-alpha-D-glucosamine = a UDP-3-O-[(3R)-3-hydroxyacyl]-N-acetyl-alpha-D-glucosamine + holo-[ACP]. It participates in glycolipid biosynthesis; lipid IV(A) biosynthesis; lipid IV(A) from (3R)-3-hydroxytetradecanoyl-[acyl-carrier-protein] and UDP-N-acetyl-alpha-D-glucosamine: step 1/6. In terms of biological role, involved in the biosynthesis of lipid A, a phosphorylated glycolipid that anchors the lipopolysaccharide to the outer membrane of the cell. This is Acyl-[acyl-carrier-protein]--UDP-N-acetylglucosamine O-acyltransferase from Helicobacter pylori (strain HPAG1).